The sequence spans 122 residues: uncharacterized protein (122 aa).

Helical transmembrane passes span 14–34 (WLWILTAILAISFFVICFNNV) and 83–103 (IIGVAFGLGFVGTMLIDYFII).

The protein resides in the cell membrane. This is an uncharacterized protein from Ureaplasma parvum serovar 3 (strain ATCC 700970).